The following is a 159-amino-acid chain: Small ribosomal subunit protein uS7c (159 aa).

Positions 137–159 are disordered; the sequence is HAIRKKEETHKMAESNRAXAHYR. Over residues 141–150 the composition is skewed to basic and acidic residues; the sequence is KKEETHKMAE.

It belongs to the universal ribosomal protein uS7 family. Part of the 30S ribosomal subunit.

The protein resides in the plastid. It is found in the chloroplast. One of the primary rRNA binding proteins, it binds directly to 16S rRNA where it nucleates assembly of the head domain of the 30S subunit. This chain is Small ribosomal subunit protein uS7c (rps7), found in Sciadopitys verticillata (Japanese umbrella-pine).